A 93-amino-acid polypeptide reads, in one-letter code: Putative pterin-4-alpha-carbinolamine dehydratase (93 aa).

The protein belongs to the pterin-4-alpha-carbinolamine dehydratase family.

It catalyses the reaction (4aS,6R)-4a-hydroxy-L-erythro-5,6,7,8-tetrahydrobiopterin = (6R)-L-erythro-6,7-dihydrobiopterin + H2O. This is Putative pterin-4-alpha-carbinolamine dehydratase from Thermomicrobium roseum (strain ATCC 27502 / DSM 5159 / P-2).